Consider the following 296-residue polypeptide: Ribosomal protein L11 methyltransferase (296 aa).

Positions 145, 166, 188, and 230 each coordinate S-adenosyl-L-methionine.

Belongs to the methyltransferase superfamily. PrmA family.

It is found in the cytoplasm. It carries out the reaction L-lysyl-[protein] + 3 S-adenosyl-L-methionine = N(6),N(6),N(6)-trimethyl-L-lysyl-[protein] + 3 S-adenosyl-L-homocysteine + 3 H(+). Functionally, methylates ribosomal protein L11. This chain is Ribosomal protein L11 methyltransferase, found in Photorhabdus laumondii subsp. laumondii (strain DSM 15139 / CIP 105565 / TT01) (Photorhabdus luminescens subsp. laumondii).